The following is a 1093-amino-acid chain: Isomaltosyltransferase (1093 aa).

The first 29 residues, 1 to 29 (MYVRNLTGSFRFSLSFLLCFCLFVPSIYA), serve as a signal peptide directing secretion. The Nucleophile role is filled by aspartate 566. Residue glutamate 569 is part of the active site. Catalysis depends on aspartate 631, which acts as the Proton donor. One can recognise a CBM6 domain in the interval 968–1091 (VEYEAEFGVQ…GINFDNIAIV (124 aa)).

It belongs to the glycosyl hydrolase 31 family.

It is found in the secreted. The catalysed reaction is 2 alpha-isomaltosyl-(1-&gt;4)-D-maltotriose = alpha-isomaltosyl-(1-&gt;3)-alpha-isomaltosyl-(1-&gt;4)-D-maltotriose + D-maltotriose. It carries out the reaction alpha-isomaltosyl-(1-&gt;3)-alpha-isomaltosyl-(1-&gt;4)-D-maltotriose = cyclobis-(1-&gt;3)-alpha-D-isomaltosyl + D-maltotriose. Its activity is regulated as follows. Strongly inhibited by Hg(2+) and moderately inhibited by Cu(2+) and Pb(2+). Other metal ions, Tris and EDTA have almost no effects. Glycosyltransferase involved, together with CtsZ, in the conversion of alpha-1,4-glucan into a cyclic tetrasaccharide (CTS) constructed from four alpha-glucopyranosyl residues. Catalyzes the alpha-(1-&gt;3) transfer of the isomaltosyl moiety of alpha-isomaltosyl-(1-&gt;4)-D-maltotriose to another alpha-isomaltosyl-(1-&gt;4)-D-maltotriose, resulting in alpha-isomaltosyl-(1-&gt;3)-alpha-isomaltosyl-alpha-(1-&gt;4)-maltotriose formation. In addition, the enzyme catalyzes the intramolecular cyclization of the product, generating the cyclic tetrasaccharide cyclobis-(1-&gt;6)-alpha-nigerosyl. The protein is Isomaltosyltransferase of Sporosarcina globispora (Bacillus globisporus).